A 1611-amino-acid chain; its full sequence is Pentafunctional AROM polypeptide (1611 aa).

The 3-dehydroquinate synthase stretch occupies residues 1–391 (MSSSSADVLK…YEEKASVVAD (391 aa)). NAD(+) is bound by residues 47–49 (DTN), 84–87 (EGAK), 115–117 (GGV), and aspartate 120. Position 131 (arginine 131) interacts with 7-phospho-2-dehydro-3-deoxy-D-arabino-heptonate. 140 to 141 (TT) serves as a coordination point for NAD(+). Aspartate 147 and lysine 153 together coordinate 7-phospho-2-dehydro-3-deoxy-D-arabino-heptonate. Lysine 162 is an NAD(+) binding site. Asparagine 163 contributes to the 7-phospho-2-dehydro-3-deoxy-D-arabino-heptonate binding site. NAD(+) contacts are provided by residues 180–183 (FLTT) and asparagine 191. A Zn(2+)-binding site is contributed by glutamate 195. 7-phospho-2-dehydro-3-deoxy-D-arabino-heptonate contacts are provided by residues 195–198 (EVIK) and lysine 257. Glutamate 267 acts as the Proton acceptor; for 3-dehydroquinate synthase activity in catalysis. Residues 271-275 (RNLVN) and histidine 278 contribute to the 7-phospho-2-dehydro-3-deoxy-D-arabino-heptonate site. Histidine 278 is a Zn(2+) binding site. Residue histidine 282 is the Proton acceptor; for 3-dehydroquinate synthase activity of the active site. 2 residues coordinate 7-phospho-2-dehydro-3-deoxy-D-arabino-heptonate: histidine 294 and lysine 363. A Zn(2+)-binding site is contributed by histidine 294. Residues 404-863 (VKAATPTKSP…WDDLQNKIGV (460 aa)) form an EPSP synthase region. Residue cysteine 845 is the For EPSP synthase activity of the active site. Residues 892-1093 (DRPIFLIGMR…SVGNPTSFLS (202 aa)) form a shikimate kinase region. 899 to 906 (GMRGAGKT) serves as a coordination point for ATP. The 3-dehydroquinase stretch occupies residues 1094–1318 (LTFPDVTPAL…AAPGQLTARE (225 aa)). The Proton acceptor; for 3-dehydroquinate dehydratase activity role is filled by histidine 1220. Catalysis depends on lysine 1248, which acts as the Schiff-base intermediate with substrate; for 3-dehydroquinate dehydratase activity. Residues 1331–1611 (AKKFVLFGSP…RKAVLDKYFA (281 aa)) are shikimate dehydrogenase.

The protein in the N-terminal section; belongs to the sugar phosphate cyclases superfamily. Dehydroquinate synthase family. It in the 2nd section; belongs to the EPSP synthase family. This sequence in the 3rd section; belongs to the shikimate kinase family. In the 4th section; belongs to the type-I 3-dehydroquinase family. The protein in the C-terminal section; belongs to the shikimate dehydrogenase family. As to quaternary structure, homodimer. It depends on Zn(2+) as a cofactor.

The protein resides in the cytoplasm. It catalyses the reaction 7-phospho-2-dehydro-3-deoxy-D-arabino-heptonate = 3-dehydroquinate + phosphate. The catalysed reaction is 3-dehydroquinate = 3-dehydroshikimate + H2O. It carries out the reaction shikimate + NADP(+) = 3-dehydroshikimate + NADPH + H(+). The enzyme catalyses shikimate + ATP = 3-phosphoshikimate + ADP + H(+). It catalyses the reaction 3-phosphoshikimate + phosphoenolpyruvate = 5-O-(1-carboxyvinyl)-3-phosphoshikimate + phosphate. It functions in the pathway metabolic intermediate biosynthesis; chorismate biosynthesis; chorismate from D-erythrose 4-phosphate and phosphoenolpyruvate: step 2/7. Its pathway is metabolic intermediate biosynthesis; chorismate biosynthesis; chorismate from D-erythrose 4-phosphate and phosphoenolpyruvate: step 3/7. The protein operates within metabolic intermediate biosynthesis; chorismate biosynthesis; chorismate from D-erythrose 4-phosphate and phosphoenolpyruvate: step 4/7. It participates in metabolic intermediate biosynthesis; chorismate biosynthesis; chorismate from D-erythrose 4-phosphate and phosphoenolpyruvate: step 5/7. It functions in the pathway metabolic intermediate biosynthesis; chorismate biosynthesis; chorismate from D-erythrose 4-phosphate and phosphoenolpyruvate: step 6/7. In terms of biological role, the AROM polypeptide catalyzes 5 consecutive enzymatic reactions in prechorismate polyaromatic amino acid biosynthesis. The protein is Pentafunctional AROM polypeptide of Cryptococcus neoformans var. neoformans serotype D (strain B-3501A) (Filobasidiella neoformans).